The chain runs to 57 residues: U17-myrmicitoxin-Tb1a (57 aa).

The N-terminal stretch at 1-29 is a signal peptide; sequence MEKNRTNIFSVYLMITFLLISIFITMVMS. A propeptide spanning residues 30–33 is cleaved from the precursor; it reads DGEA. The cysteines at positions 42 and 53 are disulfide-linked. Residue A56 is modified to Alanine amide.

In terms of processing, O-glycosylated. Expressed by the venom gland.

It is found in the secreted. In terms of biological role, serine protease inhibitor which exhibits antifibrinolytic, antielastolytic and antimicrobial activities. Displays antimicrobial activity against bacteria and fungi. Likely functions in the innate immune response to microbial infection and possibly in the venom, as an antifibrinolytic agent. The polypeptide is U17-myrmicitoxin-Tb1a (Tetramorium bicarinatum (Tramp ant)).